The sequence spans 110 residues: Inner membrane protein YgiZ (110 aa).

Residues Met-1–Thr-8 are Cytoplasmic-facing. Residues Ile-9 to Phe-29 traverse the membrane as a helical segment. Residues Asn-30–Arg-53 lie on the Periplasmic side of the membrane. The helical transmembrane segment at Ile-54 to Arg-74 threads the bilayer. At Lys-75–Glu-83 the chain is on the cytoplasmic side. A helical membrane pass occupies residues Phe-84–Gly-104. The Periplasmic portion of the chain corresponds to Arg-105–Tyr-110.

The protein localises to the cell inner membrane. The chain is Inner membrane protein YgiZ (ygiZ) from Escherichia coli (strain K12).